The sequence spans 871 residues: Chaperone protein ClpB 1 (871 aa).

Residues 6–147 form the Clp R domain; that stretch reads PNQFTEKAWA…REAIQQIRGS (142 aa). Repeat regions lie at residues 9 to 73 and 84 to 147; these read FTEK…ISRQ and LGQS…IRGS. Residues 160 to 341 are NBD1; that stretch reads AALEKYGRDL…RRFQQVYVDQ (182 aa). An ATP-binding site is contributed by 207 to 214; the sequence is GEPGVGKT. Positions 342–550 are linker; the sequence is PSVEDTISIL…IAEIISKWTG (209 aa). Residues 392-526 are a coiled coil; it reads IDLVDEAAAK…AEAKLREIQV (135 aa). The interval 560-771 is NBD2; sequence EAQKLLHLEE…RVDEFIIFHS (212 aa). 610-617 serves as a coordination point for ATP; the sequence is GPTGVGKT. The segment at 772–871 is C-terminal; it reads LRKDQLRQIV…FRRQVELATV (100 aa).

The protein belongs to the ClpA/ClpB family. In terms of assembly, homohexamer. The oligomerization is ATP-dependent.

It is found in the cytoplasm. Its function is as follows. Part of a stress-induced multi-chaperone system, it is involved in the recovery of the cell from heat-induced damage, in cooperation with DnaK, DnaJ and GrpE. Acts before DnaK, in the processing of protein aggregates. Protein binding stimulates the ATPase activity; ATP hydrolysis unfolds the denatured protein aggregates, which probably helps expose new hydrophobic binding sites on the surface of ClpB-bound aggregates, contributing to the solubilization and refolding of denatured protein aggregates by DnaK. The protein is Chaperone protein ClpB 1 (clpB1) of Thermosynechococcus vestitus (strain NIES-2133 / IAM M-273 / BP-1).